Here is a 358-residue protein sequence, read N- to C-terminus: Tripartite motif-containing protein 54 (358 aa).

The segment at 26–82 (CPICLEMFSKPVVILPCQHNLCRKCANDVFQASNPLWQSRGSTTVSSGGRFRCPSCR) adopts an RING-type zinc-finger fold. Residues 121–163 (EQHLMCEEHEEEKINIYCLSCEVPTCSLCKVFGAHKDCEVAPL) form a B box-type zinc finger. 4 residues coordinate Zn(2+): Cys-126, His-129, Cys-149, and His-155. The tract at residues 168–211 (KRQKSELSDGIAMLVAGNDRVQAVITQMEEVCQTIEDNSRRQKQ) is mediates microtubule-binding and homooligomerization. A coiled-coil region spans residues 194–258 (QMEEVCQTIE…LIRQYGDHLE (65 aa)). The region spanning 271-329 (MEEPQMALYLQQAKELINKVGAMSKVELAGRPEPGYESMEQFTVSVEHVAEMLRTIDFQ) is the COS domain. The disordered stretch occupies residues 326 to 358 (IDFQPGASGEEEEVAPDGDEGSAGQEEERPDGP). The segment covering 334–345 (GEEEEVAPDGDE) has biased composition (acidic residues).

Homooligomer and heterooligomer. Interacts with TRIM63 and probably with TRIM55. Interacts with tubulin.

The protein resides in the cytoplasm. It is found in the cytoskeleton. Its subcellular location is the myofibril. It localises to the sarcomere. The protein localises to the z line. Functionally, may bind and stabilize microtubules during myotubes formation. The protein is Tripartite motif-containing protein 54 (TRIM54) of Pongo abelii (Sumatran orangutan).